Consider the following 375-residue polypeptide: Growth/differentiation factor 8 (375 aa).

A signal peptide spans 1–23 (MQKIVVYVYIYLFVQISVDPVAL). Positions 24–266 (DGSSQPTENT…VTDTPKRSRR (243 aa)) are excised as a propeptide. N71 is a glycosylation site (N-linked (GlcNAc...) asparagine). 4 disulfide bridges follow: C272–C282, C281–C340, C309–C372, and C313–C374.

This sequence belongs to the TGF-beta family. In terms of assembly, homodimer; disulfide-linked.

The protein localises to the secreted. Acts specifically as a negative regulator of skeletal muscle growth. This is Growth/differentiation factor 8 (MSTN) from Coturnix coturnix (Common quail).